A 132-amino-acid chain; its full sequence is Large ribosomal subunit protein eL8 (132 aa).

Lysine 8 bears the N6-acetyllysine; alternate mark. Lysine 8 participates in a covalent cross-link: Glycyl lysine isopeptide (Lys-Gly) (interchain with G-Cter in SUMO2); alternate. Lysine 36 participates in a covalent cross-link: Glycyl lysine isopeptide (Lys-Gly) (interchain with G-Cter in SUMO2). The residue at position 128 (lysine 128) is an N6-acetyllysine.

It belongs to the eukaryotic ribosomal protein eL8 family. As to quaternary structure, component of the large ribosomal subunit. Interacts with CRY1. Interacts with DICER1, AGO2, TARBP2, MOV10 and EIF6; they form a large RNA-induced silencing complex (RISC).

Its subcellular location is the cytoplasm. Functionally, component of the large ribosomal subunit. The ribosome is a large ribonucleoprotein complex responsible for the synthesis of proteins in the cell. The sequence is that of Large ribosomal subunit protein eL8 (RPL7A) from Sus scrofa (Pig).